Here is a 192-residue protein sequence, read N- to C-terminus: Large ribosomal subunit protein uL5 (192 aa).

It belongs to the universal ribosomal protein uL5 family. As to quaternary structure, part of the 50S ribosomal subunit; part of the 5S rRNA/L5/L18/L25 subcomplex. Contacts the 5S rRNA and the P site tRNA. Forms a bridge to the 30S subunit in the 70S ribosome.

This is one of the proteins that bind and probably mediate the attachment of the 5S RNA into the large ribosomal subunit, where it forms part of the central protuberance. In the 70S ribosome it contacts protein S13 of the 30S subunit (bridge B1b), connecting the 2 subunits; this bridge is implicated in subunit movement. Contacts the P site tRNA; the 5S rRNA and some of its associated proteins might help stabilize positioning of ribosome-bound tRNAs. The polypeptide is Large ribosomal subunit protein uL5 (Mesorhizobium japonicum (strain LMG 29417 / CECT 9101 / MAFF 303099) (Mesorhizobium loti (strain MAFF 303099))).